Consider the following 445-residue polypeptide: Trigger factor (445 aa).

A PPIase FKBP-type domain is found at Gly168–Pro253.

This sequence belongs to the FKBP-type PPIase family. Tig subfamily.

It localises to the cytoplasm. The catalysed reaction is [protein]-peptidylproline (omega=180) = [protein]-peptidylproline (omega=0). In terms of biological role, involved in protein export. Acts as a chaperone by maintaining the newly synthesized protein in an open conformation. Functions as a peptidyl-prolyl cis-trans isomerase. The protein is Trigger factor of Hyphomonas neptunium (strain ATCC 15444).